A 101-amino-acid polypeptide reads, in one-letter code: uncharacterized protein (101 aa).

The helical transmembrane segment at 58 to 80 (VFPSLNIIILMSDALMFFLRSSI) threads the bilayer.

It localises to the membrane. This is an uncharacterized protein from Saccharomyces cerevisiae (strain ATCC 204508 / S288c) (Baker's yeast).